The sequence spans 361 residues: DNA-(apurinic or apyrimidinic site) endonuclease (361 aa).

A disordered region spans residues 1–90; it reads MTSRTKKLKM…TNKTTASVSI (90 aa). Over residues 25–39 the composition is skewed to acidic residues; it reads TSEEEKEEVEEEEEE. A Nuclear localization signal motif is present at residues 41-44; that stretch reads KKRK. Basic residues predominate over residues 43–64; the sequence is RKLVKKTPAKKAPAKKAAAKKK. The segment covering 68–80 has biased composition (acidic residues); that stretch reads EDEDEEEKEEEEE. Glutamate 139 is a binding site for Mg(2+). The active site involves tyrosine 211. Aspartate 252, asparagine 254, and aspartate 350 together coordinate Mg(2+). The active-site Proton donor/acceptor is aspartate 252.

This sequence belongs to the DNA repair enzymes AP/ExoA family. Requires Mg(2+) as cofactor. Mn(2+) is required as a cofactor.

The protein localises to the nucleus. In Dictyostelium discoideum (Social amoeba), this protein is DNA-(apurinic or apyrimidinic site) endonuclease (apeA).